Here is an 85-residue protein sequence, read N- to C-terminus: Small integral membrane protein 2 (85 aa).

Residues 21–43 (GHAISILFGFWTSFICDTYIVLA) traverse the membrane as a helical segment. The interval 51–85 (SPDVSASSDEPYARIQQSRRQCHAEEDQSQVPEAG) is disordered.

The protein localises to the membrane. The sequence is that of Small integral membrane protein 2 (SMIM2) from Homo sapiens (Human).